The primary structure comprises 59 residues: Large ribosomal subunit protein bL32 (59 aa).

The tract at residues 1 to 59 (MAVQQNRKTPSKRGMRRSHDSLSKPTLSTEQNTGETHRRHHISADGYYRGRKVTRGQDD) is disordered. A compositionally biased stretch (polar residues) spans 23 to 34 (SKPTLSTEQNTG). A compositionally biased stretch (basic residues) spans 49 to 59 (RGRKVTRGQDD).

Belongs to the bacterial ribosomal protein bL32 family.

The polypeptide is Large ribosomal subunit protein bL32 (Halorhodospira halophila (strain DSM 244 / SL1) (Ectothiorhodospira halophila (strain DSM 244 / SL1))).